Here is a 112-residue protein sequence, read N- to C-terminus: T cell receptor alpha variable 17 (112 aa).

A signal peptide spans Met1–Ser21. In terms of domain architecture, Ig-like spans Gln22–Asp112. 2 N-linked (GlcNAc...) asparagine glycosylation sites follow: Asn38 and Asn42. An intrachain disulfide couples Cys43 to Cys109.

As to quaternary structure, alpha-beta TR is a heterodimer composed of an alpha and beta chain; disulfide-linked. The alpha-beta TR is associated with the transmembrane signaling CD3 coreceptor proteins to form the TR-CD3 (TcR or TCR). The assembly of alpha-beta TR heterodimers with CD3 occurs in the endoplasmic reticulum where a single alpha-beta TR heterodimer associates with one CD3D-CD3E heterodimer, one CD3G-CD3E heterodimer and one CD247 homodimer forming a stable octameric structure. CD3D-CD3E and CD3G-CD3E heterodimers preferentially associate with TR alpha and TR beta chains, respectively. The association of the CD247 homodimer is the last step of TcR assembly in the endoplasmic reticulum and is required for transport to the cell surface.

The protein localises to the cell membrane. Functionally, v region of the variable domain of T cell receptor (TR) alpha chain that participates in the antigen recognition. Alpha-beta T cell receptors are antigen specific receptors which are essential to the immune response and are present on the cell surface of T lymphocytes. Recognize peptide-major histocompatibility (MH) (pMH) complexes that are displayed by antigen presenting cells (APC), a prerequisite for efficient T cell adaptive immunity against pathogens. Binding of alpha-beta TR to pMH complex initiates TR-CD3 clustering on the cell surface and intracellular activation of LCK that phosphorylates the ITAM motifs of CD3G, CD3D, CD3E and CD247 enabling the recruitment of ZAP70. In turn ZAP70 phosphorylates LAT, which recruits numerous signaling molecules to form the LAT signalosome. The LAT signalosome propagates signal branching to three major signaling pathways, the calcium, the mitogen-activated protein kinase (MAPK) kinase and the nuclear factor NF-kappa-B (NF-kB) pathways, leading to the mobilization of transcription factors that are critical for gene expression and essential for T cell growth and differentiation. The T cell repertoire is generated in the thymus, by V-(D)-J rearrangement. This repertoire is then shaped by intrathymic selection events to generate a peripheral T cell pool of self-MH restricted, non-autoaggressive T cells. Post-thymic interaction of alpha-beta TR with the pMH complexes shapes TR structural and functional avidity. This is T cell receptor alpha variable 17 from Homo sapiens (Human).